Consider the following 374-residue polypeptide: ORC1-type DNA replication protein 6 (374 aa).

Residues 66–70 (TGKTT), tyrosine 209, and arginine 221 contribute to the ATP site.

The protein belongs to the CDC6/cdc18 family.

Its function is as follows. Involved in regulation of DNA replication. The sequence is that of ORC1-type DNA replication protein 6 (orc6) from Halobacterium salinarum (strain ATCC 700922 / JCM 11081 / NRC-1) (Halobacterium halobium).